The primary structure comprises 321 residues: Tetraacyldisaccharide 4'-kinase (321 aa).

ATP is bound at residue 54–61 (SVGGTGKT).

It belongs to the LpxK family.

It catalyses the reaction a lipid A disaccharide + ATP = a lipid IVA + ADP + H(+). Its pathway is glycolipid biosynthesis; lipid IV(A) biosynthesis; lipid IV(A) from (3R)-3-hydroxytetradecanoyl-[acyl-carrier-protein] and UDP-N-acetyl-alpha-D-glucosamine: step 6/6. Transfers the gamma-phosphate of ATP to the 4'-position of a tetraacyldisaccharide 1-phosphate intermediate (termed DS-1-P) to form tetraacyldisaccharide 1,4'-bis-phosphate (lipid IVA). This Rickettsia peacockii (strain Rustic) protein is Tetraacyldisaccharide 4'-kinase.